A 571-amino-acid polypeptide reads, in one-letter code: Proline--tRNA ligase 1 (571 aa).

Belongs to the class-II aminoacyl-tRNA synthetase family. ProS type 1 subfamily. As to quaternary structure, homodimer.

It is found in the cytoplasm. The catalysed reaction is tRNA(Pro) + L-proline + ATP = L-prolyl-tRNA(Pro) + AMP + diphosphate. Functionally, catalyzes the attachment of proline to tRNA(Pro) in a two-step reaction: proline is first activated by ATP to form Pro-AMP and then transferred to the acceptor end of tRNA(Pro). As ProRS can inadvertently accommodate and process non-cognate amino acids such as alanine and cysteine, to avoid such errors it has two additional distinct editing activities against alanine. One activity is designated as 'pretransfer' editing and involves the tRNA(Pro)-independent hydrolysis of activated Ala-AMP. The other activity is designated 'posttransfer' editing and involves deacylation of mischarged Ala-tRNA(Pro). The misacylated Cys-tRNA(Pro) is not edited by ProRS. This chain is Proline--tRNA ligase 1, found in Clostridioides difficile (strain 630) (Peptoclostridium difficile).